The following is a 278-amino-acid chain: NH(3)-dependent NAD(+) synthetase (278 aa).

39-46 (GVSGGVDS) contributes to the ATP binding site. Aspartate 45 is a binding site for Mg(2+). Arginine 121 is a binding site for deamido-NAD(+). Threonine 141 provides a ligand contact to ATP. Residue glutamate 146 coordinates Mg(2+). The deamido-NAD(+) site is built by lysine 154 and aspartate 161. Residues lysine 170 and serine 192 each contribute to the ATP site. 252–253 (HK) contributes to the deamido-NAD(+) binding site.

The protein belongs to the NAD synthetase family. As to quaternary structure, homodimer.

The enzyme catalyses deamido-NAD(+) + NH4(+) + ATP = AMP + diphosphate + NAD(+) + H(+). It functions in the pathway cofactor biosynthesis; NAD(+) biosynthesis; NAD(+) from deamido-NAD(+) (ammonia route): step 1/1. Catalyzes the ATP-dependent amidation of deamido-NAD to form NAD. Uses ammonia as a nitrogen source. This is NH(3)-dependent NAD(+) synthetase from Saccharolobus solfataricus (strain ATCC 35092 / DSM 1617 / JCM 11322 / P2) (Sulfolobus solfataricus).